The following is a 653-amino-acid chain: Sodium-dependent nutrient amino acid transporter 1 (653 aa).

Residues 1 to 55 are disordered; that stretch reads MELKGVHQQNGTSNGTGAAGTEGESPPPAPAPATAEAAASLETTTEKVDAEQQKT. At 1–59 the chain is on the cytoplasmic side; that stretch reads MELKGVHQQNGTSNGTGAAGTEGESPPPAPAPATAEAAASLETTTEKVDAEQQKTERTN. Composition is skewed to low complexity over residues 10–24 and 32–43; these read NGTS…TEGE and PATAEAAASLET. Residues 44–55 are compositionally biased toward basic and acidic residues; that stretch reads TTEKVDAEQQKT. The next 4 helical transmembrane spans lie at 60 to 80, 93 to 113, 125 to 145, and 146 to 166; these read WGNG…LGNV, GAFL…MYYL, TVKI…QAFA, and TICI…YLFV. Residues N202 and N205 are each glycosylated (N-linked (GlcNAc...) asparagine). The next 9 membrane-spanning stretches (helical) occupy residues 241 to 261, 270 to 290, 319 to 339, 353 to 373, 413 to 433, 459 to 479, 486 to 506, 528 to 548, and 565 to 585; these read PDWK…LVIM, AAYF…VRAV, AVVQ…MFAS, IVTT…FAIL, LFSV…IVAL, ICGF…ILTL, TYVV…IYGM, CWSF…MVTI, and AGWL…MWYI.

It belongs to the sodium:neurotransmitter symporter (SNF) (TC 2.A.22) family.

It is found in the membrane. Unusual broad substrate spectrum amino acid:sodium cotransporter that promotes absorption of the D isomers of essential amino acids. Neutral amino acids are the preferred substrates, especially methionine and phenylalanine. This is Sodium-dependent nutrient amino acid transporter 1 from Drosophila pseudoobscura pseudoobscura (Fruit fly).